We begin with the raw amino-acid sequence, 142 residues long: uncharacterized protein (142 aa).

A disordered region spans residues 1–31 (MSLPKKKKPEVEEEEKPEEEEEKEEEQEIDI). A compositionally biased stretch (acidic residues) spans 11–29 (VEEEEKPEEEEEKEEEQEI).

This is an uncharacterized protein from Acidianus sp. F28 (AFV-2).